A 152-amino-acid polypeptide reads, in one-letter code: RxLR effector protein Avrblb1 (152 aa).

Residues 1 to 24 (MRSLLLTVLLNLVVLLATTGAVSS) form the signal peptide. The RxLR-dEER signature appears at 51–72 (RSLRGDYNNEVTKEPNTSDEER). The RGD RLK-binding motif motif lies at 54–56 (RGD). Asn66 carries an N-linked (GlcNAc...) asparagine glycan. The segment at 99-152 (QSKTVLRYEDKLFTALYKSGETPRSLRTKHLDKASASVFFNRFKKWYDKNVGPS) is w motif.

It belongs to the RxLR effector family. As to quaternary structure, interacts with host defense protein RGA2/Rpi-blb1. Interacts with host legume-type lectin receptor kinase LECRK19.

The protein localises to the secreted. It localises to the host nucleus. It is found in the host nucleolus. Its subcellular location is the host cell membrane. In terms of biological role, secreted effector that acts as an elicitor of hypersensitive response (HR) specifically on plants carrying defense protein RGA2/Rpi-blb1. Enhances P.infestans colonization of plant hosts Nicotiana benthamiana and potato Solanum bulbocastanum leaves. Associates with host legume-type lectin receptor kinases and disrupts attachments between the host plasma membrane and cell wall. In Phytophthora infestans (strain T30-4) (Potato late blight agent), this protein is RxLR effector protein Avrblb1.